A 340-amino-acid chain; its full sequence is Phosphate acyltransferase (340 aa).

This sequence belongs to the PlsX family. In terms of assembly, homodimer. Probably interacts with PlsY.

It is found in the cytoplasm. The catalysed reaction is a fatty acyl-[ACP] + phosphate = an acyl phosphate + holo-[ACP]. It functions in the pathway lipid metabolism; phospholipid metabolism. In terms of biological role, catalyzes the reversible formation of acyl-phosphate (acyl-PO(4)) from acyl-[acyl-carrier-protein] (acyl-ACP). This enzyme utilizes acyl-ACP as fatty acyl donor, but not acyl-CoA. The chain is Phosphate acyltransferase from Clostridioides difficile (strain 630) (Peptoclostridium difficile).